The primary structure comprises 245 residues: RAD51-like protein 1 (245 aa).

Interacts with brc-2 and rad-51.

Its subcellular location is the nucleus. Functionally, has a role in the homologous recombination repair (HRR) of genomic DNA during meiosis. Required for rad-51 recruitment onto ssDNA gaps generated at stalled replication fork barriers. This chain is RAD51-like protein 1 (rfs-1), found in Caenorhabditis elegans.